Consider the following 1057-residue polypeptide: DNA-directed RNA polymerase subunit beta' (1057 aa).

Zn(2+)-binding residues include Cys60, Cys62, Cys75, and Cys78. Mg(2+) is bound by residues Asp449, Asp451, and Asp453. Positions 822, 896, 903, and 906 each coordinate Zn(2+).

This sequence belongs to the RNA polymerase beta' chain family. In terms of assembly, the RNAP catalytic core consists of 2 alpha, 1 beta, 1 beta' and 1 omega subunit. When a sigma factor is associated with the core the holoenzyme is formed, which can initiate transcription. Requires Mg(2+) as cofactor. The cofactor is Zn(2+).

The enzyme catalyses RNA(n) + a ribonucleoside 5'-triphosphate = RNA(n+1) + diphosphate. DNA-dependent RNA polymerase catalyzes the transcription of DNA into RNA using the four ribonucleoside triphosphates as substrates. This Staphylococcus aureus protein is DNA-directed RNA polymerase subunit beta'.